Here is a 234-residue protein sequence, read N- to C-terminus: MKIIRVQDQLEGGKVAFSLLKESLAEGATTLGLATGSTPITFYQELVNSDLDCSALTSINLDEYVGLPVENDQSYDYFMRDQLFNAKPFKESFLPNGLADDLEAEVKRYDQVIAEHPIDFQILGIGRNGHIGFNEPGTPFAEKTHVVDLQASTIEANSRFFASIDDVPKQAISMGIASIMASKMIVLLAFGKEKAAAIKGMVSGPVTEALPASVLQQHDHVVVIVDEAAASELD.

The Proton acceptor; for enolization step role is filled by D62. N128 functions as the For ring-opening step in the catalytic mechanism. The Proton acceptor; for ring-opening step role is filled by H130. The active-site For ring-opening step is the E135.

Belongs to the glucosamine/galactosamine-6-phosphate isomerase family. NagB subfamily.

It catalyses the reaction alpha-D-glucosamine 6-phosphate + H2O = beta-D-fructose 6-phosphate + NH4(+). The protein operates within amino-sugar metabolism; N-acetylneuraminate degradation; D-fructose 6-phosphate from N-acetylneuraminate: step 5/5. Its function is as follows. Catalyzes the reversible isomerization-deamination of glucosamine 6-phosphate (GlcN6P) to form fructose 6-phosphate (Fru6P) and ammonium ion. This chain is Glucosamine-6-phosphate deaminase, found in Streptococcus equi subsp. zooepidemicus (strain H70).